We begin with the raw amino-acid sequence, 79 residues long: Acyl carrier protein (79 aa).

One can recognise a Carrier domain in the interval 2–77 (SNIEERVKKI…QAIDYINAHA (76 aa)). Position 37 is an O-(pantetheine 4'-phosphoryl)serine (Ser-37).

It belongs to the acyl carrier protein (ACP) family. 4'-phosphopantetheine is transferred from CoA to a specific serine of apo-ACP by AcpS. This modification is essential for activity because fatty acids are bound in thioester linkage to the sulfhydryl of the prosthetic group.

The protein resides in the cytoplasm. It functions in the pathway lipid metabolism; fatty acid biosynthesis. Its function is as follows. Carrier of the growing fatty acid chain in fatty acid biosynthesis. The protein is Acyl carrier protein of Thioalkalivibrio sulfidiphilus (strain HL-EbGR7).